A 625-amino-acid chain; its full sequence is Glutamine--fructose-6-phosphate aminotransferase [isomerizing] (625 aa).

Residue Cys-2 is the Nucleophile; for GATase activity of the active site. The Glutamine amidotransferase type-2 domain occupies 2-229; that stretch reads CGIVGFVGRT…NDQIVTITAD (228 aa). SIS domains lie at 296-436 and 470-615; these read IDES…LRGN and LAQD…VDQP. Lys-620 (for Fru-6P isomerization activity) is an active-site residue.

Homodimer.

It is found in the cytoplasm. It carries out the reaction D-fructose 6-phosphate + L-glutamine = D-glucosamine 6-phosphate + L-glutamate. Functionally, catalyzes the first step in hexosamine metabolism, converting fructose-6P into glucosamine-6P using glutamine as a nitrogen source. The sequence is that of Glutamine--fructose-6-phosphate aminotransferase [isomerizing] from Corynebacterium diphtheriae (strain ATCC 700971 / NCTC 13129 / Biotype gravis).